Here is a 281-residue protein sequence, read N- to C-terminus: NADPH-dependent 7-cyano-7-deazaguanine reductase (281 aa).

88-90 is a binding site for substrate; the sequence is IES. An NADPH-binding site is contributed by 90 to 91; it reads SK. Catalysis depends on cysteine 189, which acts as the Thioimide intermediate. Aspartate 196 (proton donor) is an active-site residue. 228–229 serves as a coordination point for substrate; the sequence is HE. 257 to 258 lines the NADPH pocket; sequence RG.

Belongs to the GTP cyclohydrolase I family. QueF type 2 subfamily. As to quaternary structure, homodimer.

The protein localises to the cytoplasm. It catalyses the reaction 7-aminomethyl-7-carbaguanine + 2 NADP(+) = 7-cyano-7-deazaguanine + 2 NADPH + 3 H(+). The protein operates within tRNA modification; tRNA-queuosine biosynthesis. Catalyzes the NADPH-dependent reduction of 7-cyano-7-deazaguanine (preQ0) to 7-aminomethyl-7-deazaguanine (preQ1). In Sodalis glossinidius (strain morsitans), this protein is NADPH-dependent 7-cyano-7-deazaguanine reductase.